The chain runs to 682 residues: Tail-specific protease (682 aa).

Residues 1–22 (MNTFFRLTALAGLLALAGQSFA) form the signal peptide. Residues 238 to 322 (NTEMSLSLEG…SKVRLEILPA (85 aa)) enclose the PDZ domain. Active-site charge relay system residues include serine 452, aspartate 463, and lysine 477.

Belongs to the peptidase S41A family.

It localises to the cell inner membrane. The enzyme catalyses The enzyme shows specific recognition of a C-terminal tripeptide, Xaa-Yaa-Zaa, in which Xaa is preferably Ala or Leu, Yaa is preferably Ala or Tyr, and Zaa is preferably Ala, but then cleaves at a variable distance from the C-terminus. A typical cleavage is -Ala-Ala-|-Arg-Ala-Ala-Lys-Glu-Asn-Tyr-Ala-Leu-Ala-Ala.. Involved in the cleavage of a C-terminal peptide of 11 residues from the precursor form of penicillin-binding protein 3 (PBP3). May be involved in protection of the bacterium from thermal and osmotic stresses. This Salmonella typhimurium (strain LT2 / SGSC1412 / ATCC 700720) protein is Tail-specific protease (prc).